The primary structure comprises 75 residues: Peptide Ctri10033 (75 aa).

The first 22 residues, Met-1–Gly-22, serve as a signal peptide directing secretion. Residue Arg-43 is modified to Arginine amide. A propeptide spanning residues Glu-47–Tyr-75 is cleaved from the precursor.

It belongs to the non-disulfide-bridged peptide (NDBP) superfamily. Short antimicrobial peptide (group 4) family. Expressed by the venom gland.

Its subcellular location is the secreted. This Chaerilus tricostatus (Scorpion) protein is Peptide Ctri10033.